The following is a 360-amino-acid chain: Phospho-N-acetylmuramoyl-pentapeptide-transferase (360 aa).

10 consecutive transmembrane segments (helical) span residues 25-45, 73-93, 97-117, 132-152, 168-188, 199-219, 236-256, 263-283, 288-308, and 338-358; these read RGILGVLTALALSLWLGPWMI, TMGGALILTAIAVSTLLWADL, YVWVVLAVTLLFGAIGWVDDY, WKYFWQSVFGLAAAIFLYMTA, VSIPLGIGFVVLTYFVIVGSS, GLAILPTVMVAGALAVFCYLS, AGELIVFCAALVGAGLGFLWF, VFMGDVGALALGAALGTIAVI, VVLFIMGGVFVMETLSVIIQV, and VIVRFWIITVILVLIGLATLK.

The protein belongs to the glycosyltransferase 4 family. MraY subfamily. Mg(2+) serves as cofactor.

The protein resides in the cell inner membrane. The enzyme catalyses UDP-N-acetyl-alpha-D-muramoyl-L-alanyl-gamma-D-glutamyl-meso-2,6-diaminopimeloyl-D-alanyl-D-alanine + di-trans,octa-cis-undecaprenyl phosphate = di-trans,octa-cis-undecaprenyl diphospho-N-acetyl-alpha-D-muramoyl-L-alanyl-D-glutamyl-meso-2,6-diaminopimeloyl-D-alanyl-D-alanine + UMP. It participates in cell wall biogenesis; peptidoglycan biosynthesis. Its function is as follows. Catalyzes the initial step of the lipid cycle reactions in the biosynthesis of the cell wall peptidoglycan: transfers peptidoglycan precursor phospho-MurNAc-pentapeptide from UDP-MurNAc-pentapeptide onto the lipid carrier undecaprenyl phosphate, yielding undecaprenyl-pyrophosphoryl-MurNAc-pentapeptide, known as lipid I. This Ectopseudomonas mendocina (strain ymp) (Pseudomonas mendocina) protein is Phospho-N-acetylmuramoyl-pentapeptide-transferase.